A 248-amino-acid polypeptide reads, in one-letter code: Type III pantothenate kinase (248 aa).

D6–K13 serves as a coordination point for ATP. G103–R106 serves as a coordination point for substrate. The Proton acceptor role is filled by D105. D124 lines the K(+) pocket. T127 lines the ATP pocket. T178 is a substrate binding site.

Belongs to the type III pantothenate kinase family. Homodimer. The cofactor is NH4(+). Requires K(+) as cofactor.

The protein resides in the cytoplasm. It catalyses the reaction (R)-pantothenate + ATP = (R)-4'-phosphopantothenate + ADP + H(+). It functions in the pathway cofactor biosynthesis; coenzyme A biosynthesis; CoA from (R)-pantothenate: step 1/5. Functionally, catalyzes the phosphorylation of pantothenate (Pan), the first step in CoA biosynthesis. This is Type III pantothenate kinase from Pelagibacter ubique (strain HTCC1062).